Reading from the N-terminus, the 377-residue chain is Caspase-4 (377 aa).

A required for LPS-binding region spans residues 1-59; the sequence is MAEGNHRKKPLKVLESLGKDFLTGVLDNLVEQNVLNWKEEEKKKYYDAKTEDKVRVMAD. The propeptide occupies 1 to 80; sequence MAEGNHRKKP…MLLQTFFNID (80 aa). Residues 1-91 form the CARD domain; that stretch reads MAEGNHRKKP…ISPNKKAHPN (91 aa). A2 bears the N-acetylalanine mark. S83 carries the post-translational modification Phosphoserine. A disordered region spans residues 84 to 104; sequence PNKKAHPNMEAGPPESGESTD. Active-site residues include H210 and C258. The propeptide occupies 271–289; the sequence is SPASLEVASSQSSENLEED. R314 is modified ((Microbial infection) ADP-riboxanated arginine).

Belongs to the peptidase C14A family. In terms of assembly, heterotetramer that consists of two anti-parallel arranged heterodimers, each one formed by a 20 kDa (Caspase-4 subunit p20) and a 10 kDa (Caspase-4 subunit p10) subunit. Upon direct LPS-binding, forms large homooligomers, resulting in its activation. These oligomers are often referred to as 'non-canonical inflammasomes'. In its precursor form, interacts with TMEM214; this interaction is required for association with the endoplasmic reticulum membrane. Interacts with CASP1. Interacts with NOD2. Interacts with SERPINB1; this interaction regulates CASP4 activity. Heterotetramer that consists of two anti-parallel arranged heterodimers, each one formed by a 20 kDa (Caspase-4 subunit p20) and a 10 kDa (Caspase-4 subunit p10) subunit. As to quaternary structure, (Microbial infection) Interacts with NleF protein from pathogenic E.coli; this interaction leads to enzyme inhibition. In terms of assembly, (Microbial infection) Interacts with cathepsin CTSG; the interaction is promoted by the Td92 surface protein of the periodontal pathogen T.denticola and leads to CASP4 activation. In terms of processing, in response to activation signals, undergoes autoproteolytic cleavage and activation. (Microbial infection) ADP-riboxanation by S.flexneri OspC3 blocks CASP4 autoprocessing, preventing CASP4 activation and ability to recognize and cleave GSDMD, thereby thwarting the inflammasome/pyroptosis-mediated defense. In terms of tissue distribution, widely expressed, including in keratinocytes and colonic and small intestinal epithelial cells (at protein level). Not detected in brain.

It localises to the cytoplasm. Its subcellular location is the cytosol. It is found in the endoplasmic reticulum membrane. The protein resides in the mitochondrion. The protein localises to the inflammasome. It localises to the secreted. It catalyses the reaction Strict requirement for Asp at the P1 position. It has a preferred cleavage sequence of Tyr-Val-Ala-Asp-|- but also cleaves at Asp-Glu-Val-Asp-|-.. Its activity is regulated as follows. Activated by homooligomerization induced by direct binding to cytosolic LPS, in a TLR4-independent manner. In addition to LPS, CASP4/CASP11 may also be activated by oxidized phospholipid 1-palmitoyl-2-arachidonoyl- sn-glycero-3-phosphorylcholine, an oxidized phospholipid (oxPAPC), in dendritic cells, promoting adaptive immunity. The role of oxPAPC is however unclear and another report suggests that oxPAPC competes with LPS-binding and inhibits the non-canonical inflammasome in macrophages. Functionally, inflammatory caspase that acts as the effector of the non-canonical inflammasome by mediating lipopolysaccharide (LPS)-induced pyroptosis. Also indirectly activates the NLRP3 and NLRP6 inflammasomes. Acts as a thiol protease that cleaves a tetrapeptide after an Asp residue at position P1: catalyzes cleavage of CGAS, GSDMD and IL18. Effector of the non-canonical inflammasome independently of NLRP3 inflammasome and CASP1: the non-canonical inflammasome promotes pyroptosis through GSDMD cleavage without involving secretion of cytokine IL1B. In the non-canonical inflammasome, CASP4 is activated by direct binding to the lipid A moiety of LPS without the need of an upstream sensor. LPS-binding promotes CASP4 activation and CASP4-mediated cleavage of GSDMD and IL18, followed by IL18 secretion through the GSDMD pore, pyroptosis of infected cells and their extrusion into the gut lumen. Also indirectly promotes secretion of mature cytokines (IL1A and HMGB1) downstream of GSDMD-mediated pyroptosis via activation of the NLRP3 and NLRP6 inflammasomes. Involved in NLRP3-dependent CASP1 activation and IL1B secretion in response to non-canonical activators, such as UVB radiation or cholera enterotoxin. Involved in NLRP6 inflammasome-dependent activation in response to lipoteichoic acid (LTA), a cell-wall component of Gram-positive bacteria, which leads to CASP1 activation and IL1B secretion. Involved in LPS-induced IL6 secretion; this activity may not require caspase enzymatic activity. The non-canonical inflammasome is required for innate immunity to cytosolic, but not vacuolar, bacteria. Plays a crucial role in the restriction of S.typhimurium replication in colonic epithelial cells during infection. Activation of the non-canonical inflammasome in brain endothelial cells can lead to excessive pyroptosis, leading to blood-brain barrier breakdown. Pyroptosis limits bacterial replication, while cytokine secretion promotes the recruitment and activation of immune cells and triggers mucosal inflammation. May also act as an activator of adaptive immunity in dendritic cells, following activation by oxidized phospholipid 1-palmitoyl-2-arachidonoyl- sn-glycero-3-phosphorylcholine, an oxidized phospholipid (oxPAPC). Involved in cell death induced by endoplasmic reticulum stress and by treatment with cytotoxic APP peptides found in Alzheimer's patient brains. Cleavage of GSDMD is not strictly dependent on the consensus cleavage site but depends on an exosite interface on CASP4 that recognizes and binds the Gasdermin-D, C-terminal (GSDMD-CT) part. Catalyzes cleavage and maturation of IL18; IL18 processing also depends of the exosite interface on CASP4. In contrast, it does not directly process IL1B. During non-canonical inflammasome activation, cuts CGAS and may play a role in the regulation of antiviral innate immune activation. Its function is as follows. (Microbial infection) In response to the Td92 surface protein of the periodontal pathogen T.denticola, activated by cathepsin CTSG which leads to production and secretion of IL1A and pyroptosis of gingival fibroblasts. The protein is Caspase-4 of Homo sapiens (Human).